We begin with the raw amino-acid sequence, 228 residues long: 7-cyano-7-deazaguanine synthase (228 aa).

Residue 16–26 (FSGGQDSTTCL) participates in ATP binding. Residues Cys195, Cys203, Cys206, and Cys209 each contribute to the Zn(2+) site.

It belongs to the QueC family. Zn(2+) serves as cofactor.

It catalyses the reaction 7-carboxy-7-deazaguanine + NH4(+) + ATP = 7-cyano-7-deazaguanine + ADP + phosphate + H2O + H(+). It participates in purine metabolism; 7-cyano-7-deazaguanine biosynthesis. Functionally, catalyzes the ATP-dependent conversion of 7-carboxy-7-deazaguanine (CDG) to 7-cyano-7-deazaguanine (preQ(0)). This Haemophilus influenzae (strain ATCC 51907 / DSM 11121 / KW20 / Rd) protein is 7-cyano-7-deazaguanine synthase.